The primary structure comprises 590 residues: Protein phosphatase PP2A regulatory subunit A (590 aa).

11 HEAT repeats span residues proline 12–glutamate 50, leucine 89–tyrosine 127, phenylalanine 206–histidine 244, leucine 246–glutamate 284, leucine 285–glutamate 323, isoleucine 324–tyrosine 362, leucine 363–serine 401, leucine 402–lysine 440, isoleucine 480–glutamine 518, isoleucine 519–alanine 551, and isoleucine 562–aspartate 590.

It belongs to the phosphatase 2A regulatory subunit A family. In terms of assembly, PP2A exists in several trimeric forms, all of which consist of a core composed of a catalytic subunit associated with a 65 kDa (PR65) (Subunit A) and a 55 kDa (PR55) (Subunit B) regulatory subunit.

Functionally, phosphatase 2A affects a variety of biological processes in the cell such as transcription, cell cycle progression and cellular morphogenesis, and provides an initial identification of critical substrates for this phosphatase. The regulatory subunit may direct the catalytic subunit to distinct, albeit overlapping, subsets of substrates. This chain is Protein phosphatase PP2A regulatory subunit A (paa1), found in Schizosaccharomyces pombe (strain 972 / ATCC 24843) (Fission yeast).